Here is a 176-residue protein sequence, read N- to C-terminus: MEERLILVDTDDRPIGICEKMRAHHEGLLHRAFSIFVFDSAGRLLLQQRALNKYHSGGLWSNTCCGHPRPREALPDAVRRRLGEEMGFACELRPVDALVYRARFENDLIEHEFVHIHVGRFDGTVAPDFAEVAAWRWIDVPTLLEWMADEPSAFTVWFHCMIERAGLPVLHRWAHR.

His-24 and His-30 together coordinate Mn(2+). Residues 28 to 160 form the Nudix hydrolase domain; it reads LLHRAFSIFV…PSAFTVWFHC (133 aa). Residue Cys-65 is part of the active site. His-67 serves as a coordination point for Mn(2+). Glu-85 contacts Mg(2+). Positions 110 and 112 each coordinate Mn(2+). Glu-112 is an active-site residue.

This sequence belongs to the IPP isomerase type 1 family. It depends on Mg(2+) as a cofactor. The cofactor is Mn(2+).

The protein localises to the cytoplasm. The enzyme catalyses isopentenyl diphosphate = dimethylallyl diphosphate. The protein operates within isoprenoid biosynthesis; dimethylallyl diphosphate biosynthesis; dimethylallyl diphosphate from isopentenyl diphosphate: step 1/1. Catalyzes the 1,3-allylic rearrangement of the homoallylic substrate isopentenyl (IPP) to its highly electrophilic allylic isomer, dimethylallyl diphosphate (DMAPP). This is Isopentenyl-diphosphate Delta-isomerase from Burkholderia multivorans (strain ATCC 17616 / 249).